The chain runs to 400 residues: uncharacterized protein (400 aa).

Positions 1-23 (MSRKLLLALTFLVVLGIAVVVMA) are cleaved as a signal peptide.

This is an uncharacterized protein from Archaeoglobus fulgidus (strain ATCC 49558 / DSM 4304 / JCM 9628 / NBRC 100126 / VC-16).